A 353-amino-acid chain; its full sequence is uncharacterized protein (353 aa).

A signal peptide spans 1 to 18 (MKFVLFAQLAAVAAPAIA). The tract at residues 94-119 (EGGNVRRVPGGPSQSARQIGDSSTPM) is disordered. Positions 105 to 119 (PSQSARQIGDSSTPM) are enriched in polar residues. N-linked (GlcNAc...) asparagine glycosylation is found at Asn-165 and Asn-312.

It belongs to the glycosyl hydrolase 3 family.

It is found in the secreted. This is an uncharacterized protein from Arthroderma benhamiae (strain ATCC MYA-4681 / CBS 112371) (Trichophyton mentagrophytes).